The primary structure comprises 87 residues: Small ribosomal subunit protein uS17 (87 aa).

This sequence belongs to the universal ribosomal protein uS17 family. Part of the 30S ribosomal subunit.

One of the primary rRNA binding proteins, it binds specifically to the 5'-end of 16S ribosomal RNA. In Exiguobacterium sibiricum (strain DSM 17290 / CCUG 55495 / CIP 109462 / JCM 13490 / 255-15), this protein is Small ribosomal subunit protein uS17.